Here is a 1104-residue protein sequence, read N- to C-terminus: Isoleucine--tRNA ligase (1104 aa).

The short motif at 48–58 is the 'HIGH' region element; it reads PYTTGRIHLGT. The short motif at 644–648 is the 'KMSKS' region element; the sequence is KMSKS. K647 contributes to the ATP binding site.

The protein belongs to the class-I aminoacyl-tRNA synthetase family. IleS type 2 subfamily. Monomer. Zn(2+) is required as a cofactor.

Its subcellular location is the cytoplasm. The enzyme catalyses tRNA(Ile) + L-isoleucine + ATP = L-isoleucyl-tRNA(Ile) + AMP + diphosphate. Functionally, catalyzes the attachment of isoleucine to tRNA(Ile). As IleRS can inadvertently accommodate and process structurally similar amino acids such as valine, to avoid such errors it has two additional distinct tRNA(Ile)-dependent editing activities. One activity is designated as 'pretransfer' editing and involves the hydrolysis of activated Val-AMP. The other activity is designated 'posttransfer' editing and involves deacylation of mischarged Val-tRNA(Ile). The protein is Isoleucine--tRNA ligase of Methanocella arvoryzae (strain DSM 22066 / NBRC 105507 / MRE50).